The following is a 289-amino-acid chain: Phosphatidylinositol:ceramide inositolphosphotransferase 3 (289 aa).

The next 5 helical transmembrane spans lie at 33–53 (LVLAGLVFQYIHGLAAHGVHY), 77–97 (AFFSETVFVTIFGSFILWTFH), 115–135 (VFVYLAASQSLRIITFFATQL), 169–189 (VIYGCGDLIFSSHTIFTLVFV), and 199–219 (RWIKHLAWLMAVIQSILIIAS). Histidine 181 is a catalytic residue. Active-site residues include histidine 222 and aspartate 226. Residues 223–243 (YTVDIVVAWYTVNLVMFYVDS) form a helical membrane-spanning segment. The tract at residues 249-289 (AERSSGPSPTPLLPLSTKDSKNKSKEDHQRLLNENNVADDH) is disordered. A compositionally biased stretch (basic and acidic residues) spans 266-279 (KDSKNKSKEDHQRL). The span at 280-289 (LNENNVADDH) shows a compositional bias: polar residues.

Belongs to the sphingomyelin synthase family. Mostly expressed in stems and flowers, and, to a lower extent, in leaves, roots and siliques.

Its subcellular location is the membrane. Catalyzes the transfer of the phosphorylinositol group from phosphatidylinositol (PI) to phytoceramide, an essential step in sphingolipid biosynthesis. This is Phosphatidylinositol:ceramide inositolphosphotransferase 3 (IPCS3) from Arabidopsis thaliana (Mouse-ear cress).